Consider the following 155-residue polypeptide: UPF0303 protein lp_3613 (155 aa).

Belongs to the UPF0303 family.

In Lactiplantibacillus plantarum (strain ATCC BAA-793 / NCIMB 8826 / WCFS1) (Lactobacillus plantarum), this protein is UPF0303 protein lp_3613.